The primary structure comprises 132 residues: Small ribosomal subunit protein eS24 (132 aa).

The span at 90–100 (RLAKHGLYEKK) shows a compositional bias: basic and acidic residues. The interval 90–132 (RLAKHGLYEKKKTSRKQRKERKNRMKKVRGTAKANVGAGKKKD) is disordered. The span at 101–119 (KTSRKQRKERKNRMKKVRG) shows a compositional bias: basic residues.

It belongs to the eukaryotic ribosomal protein eS24 family. In terms of assembly, component of the small ribosomal subunit. Part of the small subunit (SSU) processome, composed of more than 70 proteins and the RNA chaperone small nucleolar RNA (snoRNA) U3.

The protein localises to the cytoplasm. It is found in the nucleus. The protein resides in the nucleolus. Functionally, component of the small ribosomal subunit. The ribosome is a large ribonucleoprotein complex responsible for the synthesis of proteins in the cell. Required for processing of pre-rRNA and maturation of 40S ribosomal subunits. Part of the small subunit (SSU) processome, first precursor of the small eukaryotic ribosomal subunit. During the assembly of the SSU processome in the nucleolus, many ribosome biogenesis factors, an RNA chaperone and ribosomal proteins associate with the nascent pre-rRNA and work in concert to generate RNA folding, modifications, rearrangements and cleavage as well as targeted degradation of pre-ribosomal RNA by the RNA exosome. This chain is Small ribosomal subunit protein eS24 (rps24), found in Xenopus laevis (African clawed frog).